We begin with the raw amino-acid sequence, 805 residues long: DNA gyrase subunit B (805 aa).

The region spanning 435–550 (SEIFIVEGDS…RGYIYIAQPP (116 aa)) is the Toprim domain. Residues Glu-441, Asp-515, and Asp-517 each contribute to the Mg(2+) site.

The protein belongs to the type II topoisomerase GyrB family. Heterotetramer, composed of two GyrA and two GyrB chains. In the heterotetramer, GyrA contains the active site tyrosine that forms a transient covalent intermediate with DNA, while GyrB binds cofactors and catalyzes ATP hydrolysis. The cofactor is Mg(2+). Requires Mn(2+) as cofactor. It depends on Ca(2+) as a cofactor.

The protein resides in the cytoplasm. It catalyses the reaction ATP-dependent breakage, passage and rejoining of double-stranded DNA.. Its function is as follows. A type II topoisomerase that negatively supercoils closed circular double-stranded (ds) DNA in an ATP-dependent manner to modulate DNA topology and maintain chromosomes in an underwound state. Negative supercoiling favors strand separation, and DNA replication, transcription, recombination and repair, all of which involve strand separation. Also able to catalyze the interconversion of other topological isomers of dsDNA rings, including catenanes and knotted rings. Type II topoisomerases break and join 2 DNA strands simultaneously in an ATP-dependent manner. The sequence is that of DNA gyrase subunit B from Caulobacter vibrioides (strain ATCC 19089 / CIP 103742 / CB 15) (Caulobacter crescentus).